The sequence spans 403 residues: Phosphopentomutase 2 (403 aa).

6 residues coordinate Mn(2+): Asp13, Asp298, His303, Asp339, His340, and His351.

It belongs to the phosphopentomutase family. Mn(2+) serves as cofactor.

It is found in the cytoplasm. The enzyme catalyses 2-deoxy-alpha-D-ribose 1-phosphate = 2-deoxy-D-ribose 5-phosphate. It catalyses the reaction alpha-D-ribose 1-phosphate = D-ribose 5-phosphate. It functions in the pathway carbohydrate degradation; 2-deoxy-D-ribose 1-phosphate degradation; D-glyceraldehyde 3-phosphate and acetaldehyde from 2-deoxy-alpha-D-ribose 1-phosphate: step 1/2. Its function is as follows. Isomerase that catalyzes the conversion of deoxy-ribose 1-phosphate (dRib-1-P) and ribose 1-phosphate (Rib-1-P) to deoxy-ribose 5-phosphate (dRib-5-P) and ribose 5-phosphate (Rib-5-P), respectively. The sequence is that of Phosphopentomutase 2 from Streptococcus agalactiae serotype Ia (strain ATCC 27591 / A909 / CDC SS700).